The chain runs to 190 residues: Threonylcarbamoyl-AMP synthase (190 aa).

One can recognise a YrdC-like domain in the interval 7-190 (NFVLADIVRA…ALTGKRFRQG (184 aa)).

This sequence belongs to the SUA5 family. TsaC subfamily.

The protein resides in the cytoplasm. The enzyme catalyses L-threonine + hydrogencarbonate + ATP = L-threonylcarbamoyladenylate + diphosphate + H2O. Functionally, required for the formation of a threonylcarbamoyl group on adenosine at position 37 (t(6)A37) in tRNAs that read codons beginning with adenine. Catalyzes the conversion of L-threonine, HCO(3)(-)/CO(2) and ATP to give threonylcarbamoyl-AMP (TC-AMP) as the acyladenylate intermediate, with the release of diphosphate. In Yersinia pestis bv. Antiqua (strain Angola), this protein is Threonylcarbamoyl-AMP synthase.